We begin with the raw amino-acid sequence, 372 residues long: N-methyl-L-tryptophan oxidase (372 aa).

4 to 34 (DLIIIGSGSVGAAAGYYATRAGLNVLMTDAH) lines the FAD pocket. Cys308 carries the S-8alpha-FAD cysteine modification.

This sequence belongs to the MSOX/MTOX family. MTOX subfamily. Monomer. It depends on FAD as a cofactor.

The enzyme catalyses N(alpha)-methyl-L-tryptophan + O2 + H2O = L-tryptophan + formaldehyde + H2O2. In terms of biological role, catalyzes the oxidative demethylation of N-methyl-L-tryptophan. This is N-methyl-L-tryptophan oxidase from Escherichia coli O81 (strain ED1a).